The primary structure comprises 251 residues: 1-(5-phosphoribosyl)-5-[(5-phosphoribosylamino)methylideneamino] imidazole-4-carboxamide isomerase (251 aa).

Residue Asp8 is the Proton acceptor of the active site. Asp131 functions as the Proton donor in the catalytic mechanism.

The protein belongs to the HisA/HisF family.

The protein resides in the cytoplasm. The enzyme catalyses 1-(5-phospho-beta-D-ribosyl)-5-[(5-phospho-beta-D-ribosylamino)methylideneamino]imidazole-4-carboxamide = 5-[(5-phospho-1-deoxy-D-ribulos-1-ylimino)methylamino]-1-(5-phospho-beta-D-ribosyl)imidazole-4-carboxamide. Its pathway is amino-acid biosynthesis; L-histidine biosynthesis; L-histidine from 5-phospho-alpha-D-ribose 1-diphosphate: step 4/9. This is 1-(5-phosphoribosyl)-5-[(5-phosphoribosylamino)methylideneamino] imidazole-4-carboxamide isomerase from Burkholderia vietnamiensis (strain G4 / LMG 22486) (Burkholderia cepacia (strain R1808)).